The primary structure comprises 482 residues: Probable polyamine transporter At1g31820 (482 aa).

11 helical membrane passes run 36–56, 66–86, 94–114, 143–163, 171–191, 254–274, 294–314, 344–364, 367–387, 406–426, and 429–449; these read VSML…PFGA, LLAL…EALI, FPIN…FWGF, VPAL…TLLL, LTIV…PFAV, VIFV…AIPL, GWLQ…MFLA, TPLL…GLSF, IIAA…IAFV, TVGS…VIVL, and IKVA…KPCL.

This sequence belongs to the amino acid-polyamine-organocation (APC) superfamily. Polyamine:cation symporter (PHS) (TC 2.A.3.12) family.

Its subcellular location is the cell membrane. Its function is as follows. Probable cell membrane polyamine/proton symporter involved in the polyamine uptake in cells. The sequence is that of Probable polyamine transporter At1g31820 from Arabidopsis thaliana (Mouse-ear cress).